The primary structure comprises 529 residues: Ectonucleoside triphosphate diphosphohydrolase 3 (529 aa).

Topologically, residues 1 to 22 (MFTVLTRQPCEQAGLKALYRTP) are cytoplasmic. The helical transmembrane segment at 23–43 (TIIALVVLLVSIVVLVSITVI) threads the bilayer. Over 44–485 (QIHKQEVLPP…PLIRLPIEPP (442 aa)) the chain is Extracellular. N-linked (GlcNAc...) asparagine glycosylation is present at N81. C92 and C116 are oxidised to a cystine. A glycan (N-linked (GlcNAc...) asparagine) is linked at N149. E182 (proton acceptor) is an active-site residue. ATP is bound at residue 222-226 (GASTQ). An N-linked (GlcNAc...) asparagine glycan is attached at N238. Intrachain disulfides connect C261–C308, C289–C334, and C347–C353. N381, N392, N402, and N454 each carry an N-linked (GlcNAc...) asparagine glycan. Cysteines 399 and 422 form a disulfide. Residues 486 to 506 (VFVGTLAFFTAAALLCLAFLA) traverse the membrane as a helical segment. Topologically, residues 507 to 529 (YLCSATRRKRHSEHAFDHAVDSD) are cytoplasmic.

The protein belongs to the GDA1/CD39 NTPase family. The cofactor is Ca(2+). Requires Mg(2+) as cofactor. In terms of tissue distribution, expressed in adult brain, pancreas, spleen and prostate. Moderate or low expression is seen in most tissues. Not expressed in liver and peripheral blood leukocytes.

The protein localises to the cell membrane. The enzyme catalyses a ribonucleoside 5'-triphosphate + 2 H2O = a ribonucleoside 5'-phosphate + 2 phosphate + 2 H(+). Its function is as follows. Has a threefold preference for the hydrolysis of ATP over ADP. The protein is Ectonucleoside triphosphate diphosphohydrolase 3 (ENTPD3) of Homo sapiens (Human).